A 467-amino-acid chain; its full sequence is 3-isopropylmalate dehydratase large subunit (467 aa).

Residues Cys348, Cys409, and Cys412 each contribute to the [4Fe-4S] cluster site. The disordered stretch occupies residues 423 to 449 (NERSISTSNRNFEGRQGKGSRTHLASP).

Belongs to the aconitase/IPM isomerase family. LeuC type 1 subfamily. In terms of assembly, heterodimer of LeuC and LeuD. Requires [4Fe-4S] cluster as cofactor.

It catalyses the reaction (2R,3S)-3-isopropylmalate = (2S)-2-isopropylmalate. It participates in amino-acid biosynthesis; L-leucine biosynthesis; L-leucine from 3-methyl-2-oxobutanoate: step 2/4. Catalyzes the isomerization between 2-isopropylmalate and 3-isopropylmalate, via the formation of 2-isopropylmaleate. The chain is 3-isopropylmalate dehydratase large subunit from Bifidobacterium longum subsp. infantis (strain ATCC 15697 / DSM 20088 / JCM 1222 / NCTC 11817 / S12).